A 266-amino-acid polypeptide reads, in one-letter code: Beta-lactamase OXA-11 (266 aa).

The signal sequence occupies residues 1–20; that stretch reads MKTFAAYVIIACLSSTALAG. Ser67 serves as the catalytic Acyl-ester intermediate. N6-carboxylysine is present on Lys70. 205-207 contributes to the substrate binding site; that stretch reads KTG.

It belongs to the class-D beta-lactamase family.

The enzyme catalyses a beta-lactam + H2O = a substituted beta-amino acid. Hydrolyzes carbenicillin, oxacillin and cephalosporin. Does not hydrolyze cefoxitin or carbapenems. This Pseudomonas aeruginosa protein is Beta-lactamase OXA-11 (bla).